Reading from the N-terminus, the 76-residue chain is Large ribosomal subunit protein bL31 (76 aa).

The protein belongs to the bacterial ribosomal protein bL31 family. Type A subfamily. In terms of assembly, part of the 50S ribosomal subunit.

In terms of biological role, binds the 23S rRNA. The sequence is that of Large ribosomal subunit protein bL31 from Gluconacetobacter diazotrophicus (strain ATCC 49037 / DSM 5601 / CCUG 37298 / CIP 103539 / LMG 7603 / PAl5).